Consider the following 176-residue polypeptide: Ribosome rescue factor SmrB (176 aa).

In terms of domain architecture, Smr spans 98–173 (LDLHGLTQKQ…GTAALLLLIE (76 aa)).

The protein belongs to the SmrB family. In terms of assembly, associates with collided ribosomes, but not with correctly translating polysomes.

Acts as a ribosome collision sensor. Detects stalled/collided disomes (pairs of ribosomes where the leading ribosome is stalled and a second ribosome has collided with it) and endonucleolytically cleaves mRNA at the 5' boundary of the stalled ribosome. Stalled/collided disomes form a new interface (primarily via the 30S subunits) that binds SmrB. Cleaved mRNA becomes available for tmRNA ligation, leading to ribosomal subunit dissociation and rescue of stalled ribosomes. This is Ribosome rescue factor SmrB from Yersinia pseudotuberculosis serotype O:1b (strain IP 31758).